The sequence spans 167 residues: Small ribosomal subunit protein uS5 (167 aa).

Residues 12–75 (IEDRVVAINR…ETARKSLIEV (64 aa)) enclose the S5 DRBM domain.

The protein belongs to the universal ribosomal protein uS5 family. In terms of assembly, part of the 30S ribosomal subunit. Contacts proteins S4 and S8.

In terms of biological role, with S4 and S12 plays an important role in translational accuracy. Its function is as follows. Located at the back of the 30S subunit body where it stabilizes the conformation of the head with respect to the body. In Pediococcus pentosaceus (strain ATCC 25745 / CCUG 21536 / LMG 10740 / 183-1w), this protein is Small ribosomal subunit protein uS5.